The chain runs to 123 residues: Holo-[acyl-carrier-protein] synthase (123 aa).

Mg(2+) contacts are provided by D8 and E50.

This sequence belongs to the P-Pant transferase superfamily. AcpS family. Mg(2+) is required as a cofactor.

Its subcellular location is the cytoplasm. The enzyme catalyses apo-[ACP] + CoA = holo-[ACP] + adenosine 3',5'-bisphosphate + H(+). Transfers the 4'-phosphopantetheine moiety from coenzyme A to a Ser of acyl-carrier-protein. This chain is Holo-[acyl-carrier-protein] synthase, found in Kocuria rhizophila (strain ATCC 9341 / DSM 348 / NBRC 103217 / DC2201).